The primary structure comprises 67 residues: DNA-directed RNA polymerases I, II, and III subunit RPABC5 (67 aa).

Cys7, Cys10, Cys44, and Cys45 together coordinate Zn(2+).

Belongs to the archaeal Rpo10/eukaryotic RPB10 RNA polymerase subunit family. In terms of assembly, component of the RNA polymerase I (Pol I), RNA polymerase II (Pol II) and RNA polymerase III (Pol III) complexes consisting of at least 13, 12 and 17 subunits, respectively.

Its subcellular location is the nucleus. Its function is as follows. DNA-dependent RNA polymerase catalyzes the transcription of DNA into RNA using the four ribonucleoside triphosphates as substrates. Common component of RNA polymerases I, II and III which synthesize ribosomal RNA precursors, mRNA precursors and many functional non-coding RNAs, and a small RNAs, such as 5S rRNA and tRNAs, respectively. Pol II is the central component of the basal RNA polymerase II transcription machinery. Pols are composed of mobile elements that move relative to each other. In Pol II, RBP10 is part of the core element with the central large cleft. This chain is DNA-directed RNA polymerases I, II, and III subunit RPABC5, found in Caenorhabditis briggsae.